Consider the following 478-residue polypeptide: Methionine aminopeptidase 2 (478 aa).

The disordered stretch occupies residues methionine 1–leucine 123. Alanine 2 bears the N-acetylalanine mark. A compositionally biased stretch (basic residues) spans lysine 36–lysine 46. Positions glutamate 55–lysine 79 are enriched in basic and acidic residues. Phosphoserine; alternate occurs at positions 60 and 63. O-linked (GlcNAc) serine; alternate glycans are attached at residues serine 60 and serine 63. Positions glutamate 80–glycine 92 are enriched in acidic residues. The span at glycine 97–proline 109 shows a compositional bias: basic residues. Histidine 231 provides a ligand contact to substrate. Residues aspartate 251, aspartate 262, and histidine 331 each contribute to the a divalent metal cation site. Histidine 339 is a binding site for substrate. 2 residues coordinate a divalent metal cation: glutamate 364 and glutamate 459.

This sequence belongs to the peptidase M24A family. Methionine aminopeptidase eukaryotic type 2 subfamily. As to quaternary structure, binds EIF2S1 at low magnesium concentrations. Interacts strongly with the eIF-2 gamma-subunit EIF2S3. The cofactor is Co(2+). It depends on Zn(2+) as a cofactor. Mn(2+) serves as cofactor. Requires Fe(2+) as cofactor. In terms of processing, O-glycosylated; contains 12 O-linked GlcNAc. Post-translationally, contains approximately 12 O-linked N-acetylglucosamine (GlcNAc) residues. O-glycosylation is required for EIF2S1 binding.

The protein resides in the cytoplasm. The enzyme catalyses Release of N-terminal amino acids, preferentially methionine, from peptides and arylamides.. Its function is as follows. Cotranslationally removes the N-terminal methionine from nascent proteins. The N-terminal methionine is often cleaved when the second residue in the primary sequence is small and uncharged (Met-Ala-, Cys, Gly, Pro, Ser, Thr, or Val). Protects eukaryotic initiation factor EIF2S1 from translation-inhibiting phosphorylation by inhibitory kinases such as EIF2AK2/PKR and EIF2AK1/HCR. Plays a critical role in the regulation of protein synthesis. The sequence is that of Methionine aminopeptidase 2 (Metap2) from Rattus norvegicus (Rat).